The chain runs to 255 residues: tRNA uridine(34) hydroxylase (255 aa).

The 95-residue stretch at 131-225 folds into the Rhodanese domain; it reads AAPDTLVLDT…YLEEVPEAQS (95 aa). Cys-185 (cysteine persulfide intermediate) is an active-site residue.

Belongs to the TrhO family.

It catalyses the reaction uridine(34) in tRNA + AH2 + O2 = 5-hydroxyuridine(34) in tRNA + A + H2O. Functionally, catalyzes oxygen-dependent 5-hydroxyuridine (ho5U) modification at position 34 in tRNAs. The chain is tRNA uridine(34) hydroxylase from Bradyrhizobium diazoefficiens (strain JCM 10833 / BCRC 13528 / IAM 13628 / NBRC 14792 / USDA 110).